The sequence spans 65 residues: Crotamine (65 aa).

The N-terminal stretch at 1 to 22 (MKILYLLFAFLFLAFLSEPGNA) is a signal peptide. Short sequence motifs (nuclear localization signal) lie at residues 24-40 (KQCH…EKIC) and 49-61 (KMDC…CCKK). Cystine bridges form between Cys-26-Cys-58, Cys-33-Cys-52, and Cys-40-Cys-59.

The protein belongs to the crotamine-myotoxin family. Monomer. Expressed by the venom gland.

Its subcellular location is the secreted. Functionally, cationic peptide that possesses multiple functions. It acts as a cell-penetrating peptide (CPP), and as a potent voltage-gated potassium channel inhibitor. It exhibits antimicrobial activities, hind limb paralysis, and severe muscle necrosis by a non-enzymatic mechanism. As a cell-penetrating peptide, crotamine has high specificity for actively proliferating cells, and interacts inside the cell with subcellular and subnuclear structures, like vesicular compartments, chromosomes and centrioles. It penetrates into the cells as fast as five minutes after its addition to cell culture medium. In vivo, after intraperitoneal administration, it is found in cells of peritoneal fluid and bone marrow, demonstrating preferential nuclear and perinuclear localization. To enter the cell, it interacts with the chains of heparan sulfate membrane proteoglycan (HSPG), and is endocytosed (in complex with HSPG) in vesicles which are transported into the cell with the help of clathrin. Inside the cell, crotamine accumulates in lysosomal vesicles. As soon as the peptide accumulates in endosomes/lysosomes vesicles, these compartments are disrupted and their contents released into the cytosol. This loss of lysosomal content induces cell death at high concentrations, or promotes the distribution of crotamine in cytoplasmic compartments, which is a step before crotamine nuclear uptake. As a potassium channel inhibitor, this toxin selectively inhibits Kv1.1/KCNA1, Kv1.2/KCNA2 and Kv1.3/KCNA3 channels with an IC(50) of 369, 386 and 287 nM, respectively. The inhibition of Kv1.3/KCNA channels induced by this toxin occurs rapidly and is voltage-independent. The channel inhibition is reversible after washing, suggesting a pure and classical channel blockage effect, without effects in potassium channel kinetics. As an antimicrobial peptide, crotamine shows antibacterial activity against E.coli and B.subtilis, and antifungal activity against Candida spp., Trichosporon spp. and C.neoformans. It kills bacteria through membrane permeabilization. This chain is Crotamine (CRO2), found in Crotalus durissus terrificus (South American rattlesnake).